Consider the following 314-residue polypeptide: Diisopropyl-fluorophosphatase (314 aa).

Residues glutamate 21, asparagine 120, asparagine 175, aspartate 229, aspartate 232, leucine 273, and histidine 274 each contribute to the Ca(2+) site. Residue histidine 287 is the Proton acceptor of the active site.

Monomer. Requires Ca(2+) as cofactor.

It catalyses the reaction diisopropyl fluorophosphate + H2O = diisopropyl phosphate + fluoride + 2 H(+). With respect to regulation, inhibited by chelating agents. Biological function and substrate unknown. However, it is capable of acting on phosphorus anhydride bonds (such as phosphorus-halide and phosphorus-cyanide) in organophosphorus compounds (including nerve gases). The sequence is that of Diisopropyl-fluorophosphatase from Loligo vulgaris (Common European squid).